The following is a 422-amino-acid chain: Zinc finger protein Gfi-1 (422 aa).

Residues 1-20 (MPRSFLVKSKKAHSYHQPRS) are SNAG domain. The segment at 1–109 (MPRSFLVKSK…ASEKSMCPSL (109 aa)) is disordered. Residues Ser20 and Ser56 each carry the phosphoserine modification. Residues 140–257 (RPCGALERGA…LLLGGGSYKC (118 aa)) are required for interaction with RELA. 6 consecutive C2H2-type zinc fingers follow at residues 255–278 (YKCI…RRSH), 284–306 (FACE…KAVH), 312–334 (FDCK…LLIH), 340–362 (YPCQ…TFIH), 368–390 (HKCQ…SRKH), and 396–419 (FGCD…ETQH).

In terms of assembly, interacts with U2AF1L4. Component of RCOR-GFI-KDM1A-HDAC complexes. Interacts directly with RCOR1, KDM1A and HDAC2. Also interacts with HDAC1. Interacts (via the zinc-finger domain) with ARIH2; the interaction prevents GFI1 ubiquitination and proteasomal degradation. Interacts with PIAS3; the interaction relieves the inhibitory effect of PIAS3 on STAT3-mediated transcriptional activity. Forms a complex with EHMT2 and HDAC1 to promote 'Lys-9' dimethylation of H3 (H3K9Me2) and repress expression of target genes. Interacts directly with EHMT2. Component of the GFI1-AJUBA-HDAC1 repressor complex. Interacts directly with AJUBA (via ITS LIM domains); the interaction results in the HDAC-dependent corepression of a subset of GFI1 target genes and, occurs independently of the SNAG domain. Interacts with SPI1; the interaction inhibits SPI1 transcriptional activity targeted at macrophage-specific genes, repressing macrophage differentiation of myeloid progenitor cells and promoting granulocyte commitment. Interacts with RUNX1T1; the interaction represses HDAC-mediated transcriptional activity. Interacts with RELA; the interaction occurs on liposaccharide (LPS) stimulation and controls RELA DNA binding activity and regulates endotoxin-mediated TOLL-like receptor inflammatory response. Interacts (via the C-terminal zinc fingers) with ZBTB17; the interaction results in the recruitment of GFI1 to the CDKN1A/p21 and CDKN1B promoters and repression of transcription. Ubiquitinated. Ubiquitination and degradation by the proteasome is inhibited by the ubiquitin ligase, ARIH2.

It localises to the nucleus. Functionally, transcription repressor essential for hematopoiesis. Functions in a cell-context and development-specific manner. Binds to 5'-TAAATCAC[AT]GCA-3' in the promoter region of a large number of genes. Component of several complexes, including the EHMT2-GFI1-HDAC1, AJUBA-GFI1-HDAC1 and RCOR-GFI-KDM1A-HDAC complexes, that suppress, via histone deacetylase (HDAC) recruitment, a number of genes implicated in multilineage blood cell development. Regulates neutrophil differentiation, promotes proliferation of lymphoid cells, and is required for granulocyte development. Inhibits SPI1 transcriptional activity at macrophage-specific genes, repressing macrophage differentiation of myeloid progenitor cells and promoting granulocyte commitment. Mediates, together with U2AF1L4, the alternative splicing of CD45 and controls T-cell receptor signaling. Regulates the endotoxin-mediated Toll-like receptor (TLR) inflammatory response by antagonizing RELA. Cooperates with CBFA2T2 to regulate ITGB1-dependent neurite growth. Controls cell-cycle progression by repressing CDKNIA/p21 transcription in response to TGFB1 via recruitment of GFI1 by ZBTB17 to the CDKNIA/p21 and CDKNIB promoters. Required for the maintenance of inner ear hair cells. In addition to its role in transcription, acts as a substrate adapter for PRMT1 in the DNA damage response: facilitates the recognition of TP53BP1 and MRE11 substrates by PRMT1, promoting their methylation and the DNA damage response. In Homo sapiens (Human), this protein is Zinc finger protein Gfi-1 (GFI1).